The chain runs to 338 residues: Alanine racemase (338 aa).

Lys33 serves as the catalytic Proton acceptor; specific for D-alanine. Lys33 carries the N6-(pyridoxal phosphate)lysine modification. Arg126 contributes to the substrate binding site. Tyr236 (proton acceptor; specific for L-alanine) is an active-site residue. Met284 is a binding site for substrate.

The protein belongs to the alanine racemase family. It depends on pyridoxal 5'-phosphate as a cofactor.

It carries out the reaction L-alanine = D-alanine. It participates in amino-acid biosynthesis; D-alanine biosynthesis; D-alanine from L-alanine: step 1/1. Catalyzes the interconversion of L-alanine and D-alanine. May also act on other amino acids. The sequence is that of Alanine racemase (alr) from Aquifex aeolicus (strain VF5).